We begin with the raw amino-acid sequence, 856 residues long: Protein translocase subunit SecA (856 aa).

ATP-binding positions include glutamine 77, 95–99 (GEGKT), and aspartate 534.

It belongs to the SecA family. Monomer and homodimer. Part of the essential Sec protein translocation apparatus which comprises SecA, SecYEG and auxiliary proteins SecDF. Other proteins may also be involved.

It is found in the cell inner membrane. It localises to the cytoplasm. It catalyses the reaction ATP + H2O + cellular proteinSide 1 = ADP + phosphate + cellular proteinSide 2.. In terms of biological role, part of the Sec protein translocase complex. Interacts with the SecYEG preprotein conducting channel. Has a central role in coupling the hydrolysis of ATP to the transfer of proteins into and across the cell membrane, serving as an ATP-driven molecular motor driving the stepwise translocation of polypeptide chains across the membrane. In Thermosipho africanus (strain TCF52B), this protein is Protein translocase subunit SecA.